Here is a 697-residue protein sequence, read N- to C-terminus: Histone deacetylase HOS3 (697 aa).

The segment at 40-440 (AKAVVVLSPY…LIGLQNQDWV (401 aa)) is histone deacetylase. The active site involves His-196. Residues 525–573 (IRSHRSNASPEKELHENKPRSTEKQEQREIRSDTKVKQLSSNNRAAETQ) are disordered. A compositionally biased stretch (basic and acidic residues) spans 534–560 (PEKELHENKPRSTEKQEQREIRSDTKV). Residues 561–573 (KQLSSNNRAAETQ) are compositionally biased toward polar residues. Phosphoserine occurs at positions 582, 583, 613, and 629. Residues 625–638 (GDEDSDHELKEKNW) are compositionally biased toward basic and acidic residues. The tract at residues 625-697 (GDEDSDHELK…KHTTRSGGRW (73 aa)) is disordered. Over residues 665–674 (QPQNANTPTY) the composition is skewed to polar residues.

This sequence belongs to the histone deacetylase family. HD type 1 subfamily. In terms of assembly, homodimer.

The protein resides in the nucleus. The catalysed reaction is N(6)-acetyl-L-lysyl-[histone] + H2O = L-lysyl-[histone] + acetate. Responsible for the deacetylation of lysine residues on the N-terminal part of the core histones (H2A, H2B, H3 and H4). Histone deacetylation gives a tag for epigenetic repression and plays an important role in transcriptional regulation, cell cycle progression and developmental events. Histone deacetylases act via the formation of large multiprotein complexes. This Saccharomyces cerevisiae (strain ATCC 204508 / S288c) (Baker's yeast) protein is Histone deacetylase HOS3 (HOS3).